Here is a 331-residue protein sequence, read N- to C-terminus: Ketol-acid reductoisomerase (NADP(+)) (331 aa).

One can recognise a KARI N-terminal Rossmann domain in the interval 2–182 (AQLFYDSDAD…GGTRAGILET (181 aa)). Residues 25-28 (YGSQ), Ser51, Ser53, and 83-86 (DEFQ) each bind NADP(+). His108 is a catalytic residue. Residue Gly134 participates in NADP(+) binding. The KARI C-terminal knotted domain occupies 183 to 328 (NFKEETETDL…KGLRSMFSWL (146 aa)). Mg(2+)-binding residues include Asp191, Glu195, Glu227, and Glu231. Ser252 lines the substrate pocket.

It belongs to the ketol-acid reductoisomerase family. It depends on Mg(2+) as a cofactor.

It catalyses the reaction (2R)-2,3-dihydroxy-3-methylbutanoate + NADP(+) = (2S)-2-acetolactate + NADPH + H(+). The enzyme catalyses (2R,3R)-2,3-dihydroxy-3-methylpentanoate + NADP(+) = (S)-2-ethyl-2-hydroxy-3-oxobutanoate + NADPH + H(+). The protein operates within amino-acid biosynthesis; L-isoleucine biosynthesis; L-isoleucine from 2-oxobutanoate: step 2/4. It participates in amino-acid biosynthesis; L-valine biosynthesis; L-valine from pyruvate: step 2/4. Functionally, involved in the biosynthesis of branched-chain amino acids (BCAA). Catalyzes an alkyl-migration followed by a ketol-acid reduction of (S)-2-acetolactate (S2AL) to yield (R)-2,3-dihydroxy-isovalerate. In the isomerase reaction, S2AL is rearranged via a Mg-dependent methyl migration to produce 3-hydroxy-3-methyl-2-ketobutyrate (HMKB). In the reductase reaction, this 2-ketoacid undergoes a metal-dependent reduction by NADPH to yield (R)-2,3-dihydroxy-isovalerate. This is Ketol-acid reductoisomerase (NADP(+)) from Parasynechococcus marenigrum (strain WH8102).